A 369-amino-acid chain; its full sequence is 2-aminoethylphosphonate--pyruvate transaminase (369 aa).

At K193 the chain carries N6-(pyridoxal phosphate)lysine.

It belongs to the class-V pyridoxal-phosphate-dependent aminotransferase family. PhnW subfamily. As to quaternary structure, homodimer. It depends on pyridoxal 5'-phosphate as a cofactor.

It catalyses the reaction (2-aminoethyl)phosphonate + pyruvate = phosphonoacetaldehyde + L-alanine. Involved in phosphonate degradation. The chain is 2-aminoethylphosphonate--pyruvate transaminase from Pseudomonas fluorescens (strain Pf0-1).